The sequence spans 1067 residues: Chitinase-like protein C25A8.4 (1067 aa).

Residues 1 to 18 (MGIKTLIWLSILVVGIYC) form the signal peptide. GH18 domains lie at 26 to 364 (PVHY…IRNT), 372 to 727 (CTRL…QVCQ), and 743 to 1067 (FVVS…HKCR). C30 and C51 form a disulfide bridge. N-linked (GlcNAc...) asparagine glycosylation is found at N47 and N216. Cysteines 376 and 397 form a disulfide. Residues N475, N538, and N710 are each glycosylated (N-linked (GlcNAc...) asparagine). Cysteines 747 and 768 form a disulfide. N-linked (GlcNAc...) asparagine glycans are attached at residues N797 and N830. Catalysis depends on E855, which acts as the Proton donor. N-linked (GlcNAc...) asparagine glycans are attached at residues N887, N933, and N1010.

The protein belongs to the glycosyl hydrolase 18 family.

It localises to the secreted. Putative chitinase. This Caenorhabditis elegans protein is Chitinase-like protein C25A8.4 (cht-3).